The primary structure comprises 294 residues: Undecaprenyl-diphosphatase (294 aa).

A run of 9 helical transmembrane segments spans residues 2-22, 27-47, 65-85, 110-130, 135-155, 172-192, 215-235, 239-259, and 272-292; these read SMIY…SLIL, LVFS…PISS, VIAF…KIFW, LCIR…MIFY, LIFE…FLLV, ITYL…WPGF, FSFF…LYHY, IGLM…FIAL, and VSLI…YWGL.

The protein belongs to the UppP family.

It is found in the cell inner membrane. The enzyme catalyses di-trans,octa-cis-undecaprenyl diphosphate + H2O = di-trans,octa-cis-undecaprenyl phosphate + phosphate + H(+). Catalyzes the dephosphorylation of undecaprenyl diphosphate (UPP). Confers resistance to bacitracin. The polypeptide is Undecaprenyl-diphosphatase (Blochmanniella pennsylvanica (strain BPEN)).